Here is a 1070-residue protein sequence, read N- to C-terminus: MLGGGNERMSTIPAFNQIQFEGFCRFIDHGLTEELSKFPKIEDTDQEIEFQLFVETYKLVEPLIKERDAVYESLTYSSELYVSAGLIWKTRRDMQEQTIFIGNIPLMNSLGTSIVNGLYRIVISQILQSPGIYYRSELDHNGISVYTGTIISDWGGRLELEIDRKARIWARVSRKQKISILVLSSAMGSNLREILENVCYPEIFLSFLNDKEKKKIGSKENAILEFYQQFSCVGGDPVFSESLCKELQKKFFQQRCELGRIGRRNLNQRLNLDIPENNTFLLQRDILAAADHLIGLKFGMGTLDDMNHLKNKRIRSVADLLQDQFGLALVRLENMVRGTICGAIRHKLIPTPQNLVTSTPLTTTFESFFGLHPLSQVLDRTNPLTQIVHGRKLSYLGPGGLTGRTASFRIRDIHPSHYGRICPIDTSEGINVGLIGSLAIHARIGHWGSLETPFYEISERSKKVRMLYLSPSRDEYYMVATGNSLALNPGIQEEQIVPARYRQEFLTIEWEQVHLRSIFPFQYFSIGASLIPFIEHNDANRALMSSNMQRQAVPLSRSEKCIVGTGLERQVARDSGVAAIAEHGGKIIYTDTDKIIFSGNGYTRRIPLVMYQRSNKNTCMQQKSQVHQGKCIKKGQILADGAATVGGELALGKNVLVAYMPWEGYNFEDAVLISERLIYEDIYTSFHIRKYEIQTHVTSHGPERITNEIPHLEARLLCNLDKNGIVMLGSWVETGDILVGKLTPQMAKESSYAPEDRLLRAILGIQVSTSKETCLKLPIGGRGRVIDVRWIQKKGGSSYNPEIIRVYISQKREIKVGDKVAGRHGNKGIVSKILPREDMPYLQNGRPVDMVFNPLGVPSRMNVGQIFECSLGLAGSLLDRHYRIVPFDERYEQEASRKLVFSELYEASKQTASPWVFEPEYPGKSRIFDGRTGNPFEQPVIIGKPYILKLIHQVDDKIHGRSSGHYALVTQQPLRGRAKQGGQRVGEMEVWALEGFGVAHILQEMLTYKSDHIRARQEVLGTTIIGGTIPKPEDTPESFRLLVRELRSLALELNHFLVSEKNFQINRKEA.

The protein belongs to the RNA polymerase beta chain family. As to quaternary structure, in plastids the minimal PEP RNA polymerase catalytic core is composed of four subunits: alpha, beta, beta', and beta''. When a (nuclear-encoded) sigma factor is associated with the core the holoenzyme is formed, which can initiate transcription.

It localises to the plastid. The protein resides in the chloroplast. It catalyses the reaction RNA(n) + a ribonucleoside 5'-triphosphate = RNA(n+1) + diphosphate. DNA-dependent RNA polymerase catalyzes the transcription of DNA into RNA using the four ribonucleoside triphosphates as substrates. In Cucumis sativus (Cucumber), this protein is DNA-directed RNA polymerase subunit beta.